The chain runs to 702 residues: MPQFQRTLVTTALPYANGPVHLGHLAGVYLPADLFVRYKRLQGEDVIHIGGSDEHGVPITITAEKEGITPRDVVDRYHSMNLEAFKRCGISFDYYGRTSSELHHKTAQEFFLEIEGKGIFERKTEKLFYDASACRFLSDRYVTGTCPICGNTEANGDQCEQCGTHLSPLELINPKSKLSDATPELRETLHWYFPLGRFQKQLEAFVGSHDDDWRANVLNYTRTWLNQGLNDRAITRDLSWGIKVPLQDPEAEGKVLYVWFDAVLGYVSFAREWAVLQGSPDRWKEYWQNPDSRVVNFIGKDNVVFHTLMLPAILMAWNEGRSDSIYNLADNVPASEFMNFEGRKFSKSRNYAVYLGEFLDKFPAETLRYSIAMNYPENKDSDFSWTDFQNRTNGELADTLGNFIKRSVDFTNSRFEGIVPHACSRQEWDSLGINWADTIHQLDEAFEGFHFREAVSAAMDIARAANRFLTGAEPWKAIKEDRDGAARTMALSLNLCHALSIALYPVLPETANRIHSMLGFQGTIESLFKRGVPLYKSLTEPALPMGHSLSGESEILFAKIDDAMIEPELRNIERLLAEAQAREAGATAEKMEFKPLIEFDDFQKVDLRAASVISAEKVKKASKLLKLQLQVGSTTRQVLAGVAEHYSPEEMVGKNVLLVANLAPRTIRGEVSEGMLLAVEGDAGKLYMVEPQGEKINGSSVQ.

The short motif at 14 to 24 (PYANGPVHLGH) is the 'HIGH' region element. 4 residues coordinate Zn(2+): C146, C149, C159, and C162. The 'KMSKS' region signature appears at 344–348 (KFSKS). Position 347 (K347) interacts with ATP. A tRNA-binding domain is found at 601 to 702 (DFQKVDLRAA…GEKINGSSVQ (102 aa)).

This sequence belongs to the class-I aminoacyl-tRNA synthetase family. MetG type 1 subfamily. As to quaternary structure, homodimer. The cofactor is Zn(2+).

Its subcellular location is the cytoplasm. It carries out the reaction tRNA(Met) + L-methionine + ATP = L-methionyl-tRNA(Met) + AMP + diphosphate. Functionally, is required not only for elongation of protein synthesis but also for the initiation of all mRNA translation through initiator tRNA(fMet) aminoacylation. The polypeptide is Methionine--tRNA ligase (Chlorobium phaeovibrioides (strain DSM 265 / 1930) (Prosthecochloris vibrioformis (strain DSM 265))).